A 1240-amino-acid chain; its full sequence is DNA-directed RNA polymerase subunit beta (1240 aa).

The protein belongs to the RNA polymerase beta chain family. As to quaternary structure, the RNAP catalytic core consists of 2 alpha, 1 beta, 1 beta' and 1 omega subunit. When a sigma factor is associated with the core the holoenzyme is formed, which can initiate transcription.

The catalysed reaction is RNA(n) + a ribonucleoside 5'-triphosphate = RNA(n+1) + diphosphate. In terms of biological role, DNA-dependent RNA polymerase catalyzes the transcription of DNA into RNA using the four ribonucleoside triphosphates as substrates. The polypeptide is DNA-directed RNA polymerase subunit beta (Rhodopirellula baltica (strain DSM 10527 / NCIMB 13988 / SH1)).